The primary structure comprises 812 residues: DNA translocase FtsK 1 (812 aa).

Residues 1-11 are compositionally biased toward basic residues; it reads MTEKSHKKTAK. Positions 1–36 are disordered; sequence MTEKSHKKTAKGRAGSPSPTSARNKKADNGARGNKV. Over residues 25–36 the composition is skewed to basic and acidic residues; it reads KKADNGARGNKV. 5 helical membrane passes run 63–83, 116–136, 156–176, 184–204, and 210–230; these read IGDA…ISLI, VGYY…CVVL, IAAA…YFVL, LPVG…AWLL, and LLII…ISWL. The Cytoplasmic portion of the chain corresponds to 231–812; that stretch reads EFLNGAGRAV…RKILAHKDHL (582 aa). The 210-residue stretch at 461–670 folds into the FtsK domain; the sequence is GTPVVGDLAK…FTVQSKIDSR (210 aa). 481-486 contributes to the ATP binding site; that stretch reads GSGKSV.

It belongs to the FtsK/SpoIIIE/SftA family. As to quaternary structure, homohexamer. Forms a ring that surrounds DNA.

The protein resides in the cell inner membrane. Functionally, essential cell division protein that coordinates cell division and chromosome segregation. The N-terminus is involved in assembly of the cell-division machinery. The C-terminus functions as a DNA motor that moves dsDNA in an ATP-dependent manner towards the dif recombination site, which is located within the replication terminus region. Translocation stops specifically at Xer-dif sites, where FtsK interacts with the Xer recombinase, allowing activation of chromosome unlinking by recombination. FtsK orienting polar sequences (KOPS) guide the direction of DNA translocation. FtsK can remove proteins from DNA as it translocates, but translocation stops specifically at XerCD-dif site, thereby preventing removal of XerC and XerD from dif. In Neisseria meningitidis serogroup B (strain ATCC BAA-335 / MC58), this protein is DNA translocase FtsK 1 (ftsK1).